The primary structure comprises 138 residues: Cyclin-dependent kinase 4 inhibitor B (138 aa).

An ANK 1; truncated repeat occupies 13-39; it reads GSDEGLASAAARGLVEKVRQLLEAGAD. ANK repeat units lie at residues 46–74, 79–108, and 112–138; these read FGRR…EPNC, TLTR…RLDV, and WGRL…ATGD.

The protein belongs to the CDKN2 cyclin-dependent kinase inhibitor family. As to quaternary structure, heterodimer of CDKN2B with CDK4 or CDK6. Isoform 2 does not interact with CDK4 nor CDK6. As to expression, isoform 2 is expressed in normal (keratinocytes, fibroblasts) and tumor cell lines.

The protein resides in the cytoplasm. Its function is as follows. Interacts strongly with CDK4 and CDK6. Potent inhibitor. Potential effector of TGF-beta induced cell cycle arrest. This chain is Cyclin-dependent kinase 4 inhibitor B (CDKN2B), found in Homo sapiens (Human).